The primary structure comprises 58 residues: LICYNDHGYIGETSESCKNGETTCYEEXWTEARXXIIERACGCXKVKPGVQMKCCKTQ.

3 cysteine pairs are disulfide-bonded: cysteine 3–cysteine 24, cysteine 17–cysteine 41, and cysteine 43–cysteine 54.

Expressed by the venom gland.

Its subcellular location is the secreted. In terms of biological role, binds to muscle nicotinic acetylcholine receptor (nAChR) and inhibit acetylcholine from binding to the receptor, thereby impairing neuromuscular transmission. In Micrurus pyrrhocryptus (Coral snake), this protein is Weak neurotoxin D2B.